The following is a 263-amino-acid chain: Indole-3-glycerol phosphate synthase (263 aa).

Belongs to the TrpC family.

It catalyses the reaction 1-(2-carboxyphenylamino)-1-deoxy-D-ribulose 5-phosphate + H(+) = (1S,2R)-1-C-(indol-3-yl)glycerol 3-phosphate + CO2 + H2O. The protein operates within amino-acid biosynthesis; L-tryptophan biosynthesis; L-tryptophan from chorismate: step 4/5. This chain is Indole-3-glycerol phosphate synthase, found in Polaromonas naphthalenivorans (strain CJ2).